A 102-amino-acid polypeptide reads, in one-letter code: DRDATILKDDRTDNGDGNFHYSFETSNGIQDTKTGVPGSAGQSNMNGDFSFPLDDGSTASFTYVADENGYHVESPLLPSIPEYVQKQIDFAAEQRARGVIFD.

Residues 16–81 enclose the Chitin-binding type R&amp;R domain; that stretch reads DGNFHYSFET…VESPLLPSIP (66 aa). Residues 23 to 33 are compositionally biased toward polar residues; that stretch reads FETSNGIQDTK. Positions 23-50 are disordered; sequence FETSNGIQDTKTGVPGSAGQSNMNGDFS.

As to expression, arthrodial membrane and calcified shell.

In Cancer pagurus (Rock crab), this protein is Cuticle protein AM/CP1114.